Here is a 497-residue protein sequence, read N- to C-terminus: Probable cytosol aminopeptidase (497 aa).

Lys-267 and Asp-272 together coordinate Mn(2+). Lys-279 is a catalytic residue. Asp-290, Asp-349, and Glu-351 together coordinate Mn(2+). Arg-353 is a catalytic residue.

Belongs to the peptidase M17 family. Mn(2+) serves as cofactor.

It localises to the cytoplasm. The catalysed reaction is Release of an N-terminal amino acid, Xaa-|-Yaa-, in which Xaa is preferably Leu, but may be other amino acids including Pro although not Arg or Lys, and Yaa may be Pro. Amino acid amides and methyl esters are also readily hydrolyzed, but rates on arylamides are exceedingly low.. The enzyme catalyses Release of an N-terminal amino acid, preferentially leucine, but not glutamic or aspartic acids.. Functionally, presumably involved in the processing and regular turnover of intracellular proteins. Catalyzes the removal of unsubstituted N-terminal amino acids from various peptides. The polypeptide is Probable cytosol aminopeptidase (Pseudomonas putida (strain W619)).